The following is a 425-amino-acid chain: tRNA(Ile)-lysidine synthase (425 aa).

Position 27–32 (27–32 (SGGLDS)) interacts with ATP.

It belongs to the tRNA(Ile)-lysidine synthase family.

It localises to the cytoplasm. It catalyses the reaction cytidine(34) in tRNA(Ile2) + L-lysine + ATP = lysidine(34) in tRNA(Ile2) + AMP + diphosphate + H(+). Ligates lysine onto the cytidine present at position 34 of the AUA codon-specific tRNA(Ile) that contains the anticodon CAU, in an ATP-dependent manner. Cytidine is converted to lysidine, thus changing the amino acid specificity of the tRNA from methionine to isoleucine. In Streptococcus sanguinis (strain SK36), this protein is tRNA(Ile)-lysidine synthase.